Reading from the N-terminus, the 679-residue chain is Methionine--tRNA ligase (679 aa).

The short motif at 14 to 24 (PYANGSIHLGH) is the 'HIGH' region element. The Zn(2+) site is built by C145, C148, C158, and C161. The short motif at 331 to 335 (KMSKS) is the 'KMSKS' region element. K334 contributes to the ATP binding site. Residues 577–679 (AFAAVDLRIA…SGAKPGQRVK (103 aa)) form the tRNA-binding domain.

The protein belongs to the class-I aminoacyl-tRNA synthetase family. MetG type 1 subfamily. As to quaternary structure, homodimer. Requires Zn(2+) as cofactor.

The protein localises to the cytoplasm. The enzyme catalyses tRNA(Met) + L-methionine + ATP = L-methionyl-tRNA(Met) + AMP + diphosphate. Is required not only for elongation of protein synthesis but also for the initiation of all mRNA translation through initiator tRNA(fMet) aminoacylation. This is Methionine--tRNA ligase from Pseudomonas paraeruginosa (strain DSM 24068 / PA7) (Pseudomonas aeruginosa (strain PA7)).